The primary structure comprises 322 residues: Undecaprenyl-phosphate 4-deoxy-4-formamido-L-arabinose transferase (322 aa).

Residues 1-235 lie on the Cytoplasmic side of the membrane; that stretch reads MFEIHPVKKV…TCLTTTPLRM (235 aa). Residues 236–256 form a helical membrane-spanning segment; the sequence is LSLLGSIIAIGGFSIAVLLVI. Topologically, residues 257 to 269 are periplasmic; the sequence is LRLTFGPQWAAEG. Residues 270 to 290 form a helical membrane-spanning segment; sequence VFMLFAVLFTFIGAQFIGMGL. Topologically, residues 291–322 are cytoplasmic; the sequence is LGEYIGRIYTDVRARPRYFVQQVIRPSSKENE.

The protein belongs to the glycosyltransferase 2 family.

It is found in the cell inner membrane. It carries out the reaction UDP-4-deoxy-4-formamido-beta-L-arabinose + di-trans,octa-cis-undecaprenyl phosphate = 4-deoxy-4-formamido-alpha-L-arabinopyranosyl di-trans,octa-cis-undecaprenyl phosphate + UDP. Its pathway is glycolipid biosynthesis; 4-amino-4-deoxy-alpha-L-arabinose undecaprenyl phosphate biosynthesis; 4-amino-4-deoxy-alpha-L-arabinose undecaprenyl phosphate from UDP-4-deoxy-4-formamido-beta-L-arabinose and undecaprenyl phosphate: step 1/2. It participates in bacterial outer membrane biogenesis; lipopolysaccharide biosynthesis. In terms of biological role, catalyzes the transfer of 4-deoxy-4-formamido-L-arabinose from UDP to undecaprenyl phosphate. The modified arabinose is attached to lipid A and is required for resistance to polymyxin and cationic antimicrobial peptides. The sequence is that of Undecaprenyl-phosphate 4-deoxy-4-formamido-L-arabinose transferase from Escherichia coli O157:H7 (strain EC4115 / EHEC).